A 204-amino-acid polypeptide reads, in one-letter code: Peroxynitrite isomerase (204 aa).

The GXWXGXG signature appears at 21-27; that stretch reads GEWEGSG. His195 contacts heme b.

This sequence belongs to the nitrobindin family. As to quaternary structure, homodimer. The cofactor is heme b.

It carries out the reaction peroxynitrite = nitrate. The protein operates within nitrogen metabolism. Functionally, heme-binding protein able to scavenge peroxynitrite and to protect free L-tyrosine against peroxynitrite-mediated nitration, by acting as a peroxynitrite isomerase that converts peroxynitrite to nitrate. Therefore, this protein likely plays a role in peroxynitrite sensing and in the detoxification of reactive nitrogen and oxygen species (RNS and ROS, respectively). Is able to bind nitric oxide (NO) in vitro, but may act as a sensor of peroxynitrite levels in vivo. The polypeptide is Peroxynitrite isomerase (Arthrobacter sp. (strain FB24)).